The following is a 314-amino-acid chain: Olfactory receptor 51G2 (314 aa).

Topologically, residues 1–30 are extracellular; that stretch reads MTLGSLGNSSSSVSATFLLSGIPGLERMHI. The N-linked (GlcNAc...) asparagine glycan is linked to Asn-8. A helical membrane pass occupies residues 31-51; it reads WISIPLCFMYLVSIPGNCTIL. At 52–59 the chain is on the cytoplasmic side; the sequence is FIIKTERS. Residues 60–80 form a helical membrane-spanning segment; that stretch reads LHEPMYLFLSMLALIDLGLSL. Over 81 to 104 the chain is Extracellular; that stretch reads CTLPTVLGIFWVGAREISHDACFA. Cys-102 and Cys-194 are joined by a disulfide. Residues 105–125 form a helical membrane-spanning segment; that stretch reads QLFFIHCFSFLESSVLLSMAF. The Cytoplasmic segment spans residues 126–144; the sequence is DRFVAICHPLHYVSILTNT. Residues 145 to 165 form a helical membrane-spanning segment; it reads VIGRIGLVSLGRSVALIFPLP. The Extracellular segment spans residues 166 to 201; sequence FMLKRFPYCGSPVLSHSYCLHQEVMKLACADMKANS. A helical transmembrane segment spans residues 202-222; sequence IYGMFVIVSTVGIDSLLILFS. Topologically, residues 223 to 242 are cytoplasmic; the sequence is YALILRTVLSIASRAERFKA. The chain crosses the membrane as a helical span at residues 243–263; the sequence is LNTCVSHICAVLLFYTPMIGL. Over 264–278 the chain is Extracellular; that stretch reads SVIHRFGKQAPHLVQ. A helical transmembrane segment spans residues 279-299; the sequence is VVMGFMYLLFPPVMNPIVYSV. Residues 300–314 lie on the Cytoplasmic side of the membrane; sequence KTKQIRDRVTHAFCY.

The protein belongs to the G-protein coupled receptor 1 family.

The protein resides in the cell membrane. Its function is as follows. Odorant receptor. In Homo sapiens (Human), this protein is Olfactory receptor 51G2 (OR51G2).